Here is a 226-residue protein sequence, read N- to C-terminus: ATP synthase F(0) complex subunit a (226 aa).

The next 6 helical transmembrane spans lie at 11 to 31 (APSM…SILF), 68 to 88 (WALM…LGLL), 97 to 117 (QLSM…ITGF), 138 to 158 (IPML…ALAV), 164 to 184 (ITAG…LINI), and 189 to 209 (AFIT…VALI).

It belongs to the ATPase A chain family. In terms of assembly, component of the ATP synthase complex composed at least of ATP5F1A/subunit alpha, ATP5F1B/subunit beta, ATP5MC1/subunit c (homooctomer), MT-ATP6/subunit a, MT-ATP8/subunit 8, ATP5ME/subunit e, ATP5MF/subunit f, ATP5MG/subunit g, ATP5MK/subunit k, ATP5MJ/subunit j, ATP5F1C/subunit gamma, ATP5F1D/subunit delta, ATP5F1E/subunit epsilon, ATP5PF/subunit F6, ATP5PB/subunit b, ATP5PD/subunit d, ATP5PO/subunit OSCP. ATP synthase complex consists of a soluble F(1) head domain (subunits alpha(3) and beta(3)) - the catalytic core - and a membrane F(0) domain - the membrane proton channel (subunits c, a, 8, e, f, g, k and j). These two domains are linked by a central stalk (subunits gamma, delta, and epsilon) rotating inside the F1 region and a stationary peripheral stalk (subunits F6, b, d, and OSCP). Interacts with DNAJC30; interaction is direct.

Its subcellular location is the mitochondrion inner membrane. The catalysed reaction is H(+)(in) = H(+)(out). Functionally, subunit a, of the mitochondrial membrane ATP synthase complex (F(1)F(0) ATP synthase or Complex V) that produces ATP from ADP in the presence of a proton gradient across the membrane which is generated by electron transport complexes of the respiratory chain. ATP synthase complex consist of a soluble F(1) head domain - the catalytic core - and a membrane F(1) domain - the membrane proton channel. These two domains are linked by a central stalk rotating inside the F(1) region and a stationary peripheral stalk. During catalysis, ATP synthesis in the catalytic domain of F(1) is coupled via a rotary mechanism of the central stalk subunits to proton translocation. With the subunit c (ATP5MC1), forms the proton-conducting channel in the F(0) domain, that contains two crucial half-channels (inlet and outlet) that facilitate proton movement from the mitochondrial intermembrane space (IMS) into the matrix. Protons are taken up via the inlet half-channel and released through the outlet half-channel, following a Grotthuss mechanism. The protein is ATP synthase F(0) complex subunit a of Canis lupus familiaris (Dog).